The primary structure comprises 530 residues: Na(+)/H(+) antiporter NhaB (530 aa).

10 consecutive transmembrane segments (helical) span residues 13 to 33 (FLGQ…LINP), 67 to 87 (PGGL…ETVL), 90 to 110 (VVGN…IYFL), 138 to 158 (AAAL…VIAV), 205 to 225 (LLMH…VGEP), 245 to 265 (MAPI…FLEF), 302 to 333 (LVIQ…VIIL), 350 to 370 (FEEA…VAVI), 449 to 469 (VATP…LAPL), and 477 to 497 (MVIM…VMTA).

The protein belongs to the NhaB Na(+)/H(+) (TC 2.A.34) antiporter family.

The protein localises to the cell inner membrane. It catalyses the reaction 2 Na(+)(in) + 3 H(+)(out) = 2 Na(+)(out) + 3 H(+)(in). In terms of biological role, na(+)/H(+) antiporter that extrudes sodium in exchange for external protons. In Alcanivorax borkumensis (strain ATCC 700651 / DSM 11573 / NCIMB 13689 / SK2), this protein is Na(+)/H(+) antiporter NhaB.